A 150-amino-acid chain; its full sequence is Arginine repressor (150 aa).

The protein belongs to the ArgR family.

It localises to the cytoplasm. It functions in the pathway amino-acid biosynthesis; L-arginine biosynthesis [regulation]. Functionally, regulates arginine biosynthesis genes. This Ruminiclostridium cellulolyticum (strain ATCC 35319 / DSM 5812 / JCM 6584 / H10) (Clostridium cellulolyticum) protein is Arginine repressor.